We begin with the raw amino-acid sequence, 468 residues long: Eukaryotic translation initiation factor 3 subunit M (468 aa).

The disordered stretch occupies residues 42 to 61 (PLIEPLRQQEQSEEEPDRKQ). The 172-residue stretch at 206–377 (DLELAQTHVV…SEFLVHRATY (172 aa)) folds into the PCI domain. The disordered stretch occupies residues 418 to 468 (MQAAAEETGQGKSGDKGAKGGDRRRNPQQQQQSQPSQPQQAREVELVGGAE). The segment covering 430-442 (SGDKGAKGGDRRR) has biased composition (basic and acidic residues). Over residues 444 to 457 (PQQQQQSQPSQPQQ) the composition is skewed to low complexity.

It belongs to the eIF-3 subunit M family. As to quaternary structure, component of the eukaryotic translation initiation factor 3 (eIF-3) complex.

The protein resides in the cytoplasm. Functionally, component of the eukaryotic translation initiation factor 3 (eIF-3) complex, which is involved in protein synthesis of a specialized repertoire of mRNAs and, together with other initiation factors, stimulates binding of mRNA and methionyl-tRNAi to the 40S ribosome. The eIF-3 complex specifically targets and initiates translation of a subset of mRNAs involved in cell proliferation. This Neosartorya fischeri (strain ATCC 1020 / DSM 3700 / CBS 544.65 / FGSC A1164 / JCM 1740 / NRRL 181 / WB 181) (Aspergillus fischerianus) protein is Eukaryotic translation initiation factor 3 subunit M.